The following is a 281-amino-acid chain: ATP phosphoribosyltransferase (281 aa).

Belongs to the ATP phosphoribosyltransferase family. Long subfamily. Requires Mg(2+) as cofactor.

The protein resides in the cytoplasm. It catalyses the reaction 1-(5-phospho-beta-D-ribosyl)-ATP + diphosphate = 5-phospho-alpha-D-ribose 1-diphosphate + ATP. Its pathway is amino-acid biosynthesis; L-histidine biosynthesis; L-histidine from 5-phospho-alpha-D-ribose 1-diphosphate: step 1/9. Its activity is regulated as follows. Feedback inhibited by histidine. Catalyzes the condensation of ATP and 5-phosphoribose 1-diphosphate to form N'-(5'-phosphoribosyl)-ATP (PR-ATP). Has a crucial role in the pathway because the rate of histidine biosynthesis seems to be controlled primarily by regulation of HisG enzymatic activity. The protein is ATP phosphoribosyltransferase of Kocuria rhizophila (strain ATCC 9341 / DSM 348 / NBRC 103217 / DC2201).